The following is a 953-amino-acid chain: Kinesin-like protein KIF23 (953 aa).

The Nuclear localization signal signature appears at 7-11 (KTVRK). The 412-residue stretch at 25-436 (PVGVYCRVRP…MRFAEVTQEV (412 aa)) folds into the Kinesin motor domain. 112–119 (GVTGSGKT) contacts ATP. Residues Ser-155 and Ser-160 each carry the phosphoserine modification. A coiled-coil region spans residues 542-618 (QEKLNEREKV…RRLEARLQGM (77 aa)). Residues Lys-572 and Lys-587 each participate in a glycyl lysine isopeptide (Lys-Gly) (interchain with G-Cter in SUMO2) cross-link. Ser-606 is subject to Phosphoserine. Residues Lys-625, Lys-648, Lys-663, and Lys-666 each participate in a glycyl lysine isopeptide (Lys-Gly) (interchain with G-Cter in SUMO2) cross-link. A disordered region spans residues 658 to 695 (IVTEPKPEKPERPSRERDREKIIPRSVSPSPLPLSSNN). The span at 662-680 (PKPEKPERPSRERDREKII) shows a compositional bias: basic and acidic residues. Over residues 681–693 (PRSVSPSPLPLSS) the composition is skewed to low complexity. Residues Ser-683 and Ser-685 each carry the phosphoserine modification. Phosphothreonine is present on Thr-739. Position 807 is a phosphoserine (Ser-807). Residues Lys-816 and Lys-847 each participate in a glycyl lysine isopeptide (Lys-Gly) (interchain with G-Cter in SUMO2) cross-link. Residue Ser-860 is modified to Phosphoserine. Residues Lys-867, Lys-870, and Lys-892 each participate in a glycyl lysine isopeptide (Lys-Gly) (interchain with G-Cter in SUMO2) cross-link. 2 disordered regions span residues 894–921 (ELPT…EWTD) and 934–953 (AGSQ…RKKP). Ser-904 carries the phosphoserine modification. Thr-920 is subject to Phosphothreonine. Residue Lys-949 forms a Glycyl lysine isopeptide (Lys-Gly) (interchain with G-Cter in SUMO2) linkage.

This sequence belongs to the TRAFAC class myosin-kinesin ATPase superfamily. Kinesin family. Heterotetramer of two molecules each of RACGAP1 and KIF23. Found in the centralspindlin complex. Interacts with RACGAP1; the interaction is direct. Interacts with ECT2 and PRC1. Interacts with ANXA11 during cytokinesis. Interacts with BIRC6/bruce and USP8/UBPY. Interacts with ARF6, forming heterodimers and heterotetramers. Post-translationally, ubiquitinated. Deubiquitinated by USP8/UBPY. In terms of tissue distribution, detected in testis and ovary from newborn mice (at protein level). Detected in brain, spinal cord and small intestine.

It localises to the nucleus. The protein localises to the cytoplasm. The protein resides in the cytoskeleton. Its subcellular location is the spindle. It is found in the midbody. It localises to the midbody ring. Its function is as follows. Component of the centralspindlin complex that serves as a microtubule-dependent and Rho-mediated signaling required for the myosin contractile ring formation during the cell cycle cytokinesis. Essential for cytokinesis in Rho-mediated signaling. Required for the localization of ECT2 to the central spindle. Plus-end-directed motor enzyme that moves antiparallel microtubules in vitro. In Mus musculus (Mouse), this protein is Kinesin-like protein KIF23 (Kif23).